Reading from the N-terminus, the 162-residue chain is Nascent polypeptide-associated complex subunit beta (162 aa).

Disordered stretches follow at residues 1-39 and 130-162; these read MPVDPAKLAALQKKSGAQSGGKGTPRRPGKKVAGRNISE and EQAKKTAGGPDAAKEAGDDEIPNLVENFEDNVE. Positions 24-33 are enriched in basic residues; that stretch reads TPRRPGKKVA. The NAC-A/B domain maps to 38–103; sequence SEDEKKLSAT…SQQKDIAELI (66 aa). The span at 146-162 shows a compositional bias: acidic residues; it reads GDDEIPNLVENFEDNVE.

This sequence belongs to the NAC-beta family. As to quaternary structure, part of the nascent polypeptide-associated complex (NAC), consisting of EGD2 and EGD1. NAC associates with ribosomes via EGD1.

It localises to the cytoplasm. The protein resides in the nucleus. Its function is as follows. Component of the nascent polypeptide-associated complex (NAC), a dynamic component of the ribosomal exit tunnel, protecting the emerging polypeptides from interaction with other cytoplasmic proteins to ensure appropriate nascent protein targeting. The NAC complex also promotes mitochondrial protein import by enhancing productive ribosome interactions with the outer mitochondrial membrane and blocks the inappropriate interaction of ribosomes translating non-secretory nascent polypeptides with translocation sites in the membrane of the endoplasmic reticulum. EGD1 may act as a transcription factor that exert a negative effect on the expression of several genes that are transcribed by RNA polymerase II. This chain is Nascent polypeptide-associated complex subunit beta (EGD1), found in Yarrowia lipolytica (strain CLIB 122 / E 150) (Yeast).